A 545-amino-acid chain; its full sequence is Calcium-dependent protein kinase 10 (545 aa).

The tract at residues 1–36 is disordered; it reads MGNCNACVRPDSKESKPSSKPKKPNRDRKLNPFAGD. Glycine 2 carries N-myristoyl glycine lipidation. One can recognise a Protein kinase domain in the interval 63–321; it reads YILGRELGRG…AQQVLAHPWI (259 aa). ATP contacts are provided by residues 69-77 and lysine 92; that span reads LGRGEFGIT. The active-site Proton acceptor is aspartate 187. Serine 227 is modified (phosphoserine). Residues 327–357 form an autoinhibitory domain region; the sequence is APNVPLGDIVRSRLKQFSMMNRFKKKVLRVI. EF-hand domains are found at residues 364–399, 400–435, 436–471, and 472–507; these read QEVE…VGSQ, LGEP…LQKI, ENDE…ELGE, and PDAS…GTDW. Positions 377, 379, 381, 383, 388, 413, 415, 417, 424, 449, 451, 453, 455, 460, 485, 487, 489, 491, and 496 each coordinate Ca(2+).

It belongs to the protein kinase superfamily. Ser/Thr protein kinase family. CDPK subfamily.

Its subcellular location is the membrane. The enzyme catalyses L-seryl-[protein] + ATP = O-phospho-L-seryl-[protein] + ADP + H(+). It catalyses the reaction L-threonyl-[protein] + ATP = O-phospho-L-threonyl-[protein] + ADP + H(+). Its activity is regulated as follows. Activated by calcium. Autophosphorylation may play an important role in the regulation of the kinase activity. Functionally, may play a role in signal transduction pathways that involve calcium as a second messenger. May be a positive regulator controlling stress signal transduction. This chain is Calcium-dependent protein kinase 10 (CPK10), found in Arabidopsis thaliana (Mouse-ear cress).